The sequence spans 189 residues: Protein GrpE (189 aa).

Over residues 1–10 (MADEQQQTLD) the composition is skewed to polar residues. The disordered stretch occupies residues 1–21 (MADEQQQTLDPQAPEQTDAPE).

Belongs to the GrpE family. As to quaternary structure, homodimer.

Its subcellular location is the cytoplasm. In terms of biological role, participates actively in the response to hyperosmotic and heat shock by preventing the aggregation of stress-denatured proteins, in association with DnaK and GrpE. It is the nucleotide exchange factor for DnaK and may function as a thermosensor. Unfolded proteins bind initially to DnaJ; upon interaction with the DnaJ-bound protein, DnaK hydrolyzes its bound ATP, resulting in the formation of a stable complex. GrpE releases ADP from DnaK; ATP binding to DnaK triggers the release of the substrate protein, thus completing the reaction cycle. Several rounds of ATP-dependent interactions between DnaJ, DnaK and GrpE are required for fully efficient folding. The sequence is that of Protein GrpE from Pseudomonas paraeruginosa (strain DSM 24068 / PA7) (Pseudomonas aeruginosa (strain PA7)).